Reading from the N-terminus, the 484-residue chain is HSPB1-associated protein 1 (484 aa).

Residues 1–26 (MAARPGAITNADSASGGGEEEGKHVK) form a disordered region. The segment at 88-208 (ETACNYVEAT…EDTPFLYPTR (121 aa)) is interaction with HSPB1. The JmjC domain maps to 124 to 288 (WAYADYKYFV…HQTRVEEAIT (165 aa)). The disordered stretch occupies residues 396–429 (TPSSEEPSSERGGIFENDGEDFVSKNGKSFGKRQ).

In terms of assembly, interacts with CRYAB and HSPB1.

The protein resides in the cytoplasm. In terms of biological role, may play a role in cellular stress response. The chain is HSPB1-associated protein 1 (HSPBAP1) from Bos taurus (Bovine).